An 872-amino-acid chain; its full sequence is Alanine--tRNA ligase (872 aa).

Residues H566, H570, C668, and H672 each contribute to the Zn(2+) site.

The protein belongs to the class-II aminoacyl-tRNA synthetase family. Zn(2+) serves as cofactor.

The protein resides in the cytoplasm. It catalyses the reaction tRNA(Ala) + L-alanine + ATP = L-alanyl-tRNA(Ala) + AMP + diphosphate. Its function is as follows. Catalyzes the attachment of alanine to tRNA(Ala) in a two-step reaction: alanine is first activated by ATP to form Ala-AMP and then transferred to the acceptor end of tRNA(Ala). Also edits incorrectly charged Ser-tRNA(Ala) and Gly-tRNA(Ala) via its editing domain. This Lactococcus lactis subsp. lactis (strain IL1403) (Streptococcus lactis) protein is Alanine--tRNA ligase.